We begin with the raw amino-acid sequence, 282 residues long: 3-methyl-2-oxobutanoate hydroxymethyltransferase (282 aa).

2 residues coordinate Mg(2+): Asp46 and Asp85. Residues 46–47, Asp85, and Lys115 each bind 3-methyl-2-oxobutanoate; that span reads DS. Residue Glu117 coordinates Mg(2+). Catalysis depends on Glu184, which acts as the Proton acceptor.

Belongs to the PanB family. As to quaternary structure, homodecamer; pentamer of dimers. It depends on Mg(2+) as a cofactor.

It is found in the cytoplasm. It carries out the reaction 3-methyl-2-oxobutanoate + (6R)-5,10-methylene-5,6,7,8-tetrahydrofolate + H2O = 2-dehydropantoate + (6S)-5,6,7,8-tetrahydrofolate. It functions in the pathway cofactor biosynthesis; (R)-pantothenate biosynthesis; (R)-pantoate from 3-methyl-2-oxobutanoate: step 1/2. Functionally, catalyzes the reversible reaction in which hydroxymethyl group from 5,10-methylenetetrahydrofolate is transferred onto alpha-ketoisovalerate to form ketopantoate. The polypeptide is 3-methyl-2-oxobutanoate hydroxymethyltransferase (Alkaliphilus metalliredigens (strain QYMF)).